We begin with the raw amino-acid sequence, 111 residues long: Large ribosomal subunit protein uL23 (111 aa).

It belongs to the universal ribosomal protein uL23 family. Part of the 50S ribosomal subunit. Contacts protein L29, and trigger factor when it is bound to the ribosome.

Its function is as follows. One of the early assembly proteins it binds 23S rRNA. One of the proteins that surrounds the polypeptide exit tunnel on the outside of the ribosome. Forms the main docking site for trigger factor binding to the ribosome. This Chlamydia muridarum (strain MoPn / Nigg) protein is Large ribosomal subunit protein uL23.